Reading from the N-terminus, the 98-residue chain is Defensin-A (98 aa).

The signal sequence occupies residues 1–18 (MKSITVICFLALCTVAIT). Positions 19 to 58 (SAYPQEPVLADEARPFANSLFDELPEETYQAAVENFRLKR) are excised as a propeptide. 3 disulfide bridges follow: Cys61–Cys88, Cys74–Cys94, and Cys78–Cys96.

This sequence belongs to the invertebrate defensin family. Type 1 subfamily.

It localises to the secreted. In terms of biological role, antibacterial peptide mostly active against Gram-positive bacteria. Has activity against the bacteria Gram-negative E.cloacae beta12. This Aedes aegypti (Yellowfever mosquito) protein is Defensin-A (DEFA).